We begin with the raw amino-acid sequence, 237 residues long: Phosphoribosylaminoimidazole-succinocarboxamide synthase (237 aa).

The protein belongs to the SAICAR synthetase family.

The catalysed reaction is 5-amino-1-(5-phospho-D-ribosyl)imidazole-4-carboxylate + L-aspartate + ATP = (2S)-2-[5-amino-1-(5-phospho-beta-D-ribosyl)imidazole-4-carboxamido]succinate + ADP + phosphate + 2 H(+). It functions in the pathway purine metabolism; IMP biosynthesis via de novo pathway; 5-amino-1-(5-phospho-D-ribosyl)imidazole-4-carboxamide from 5-amino-1-(5-phospho-D-ribosyl)imidazole-4-carboxylate: step 1/2. The sequence is that of Phosphoribosylaminoimidazole-succinocarboxamide synthase from Salmonella arizonae (strain ATCC BAA-731 / CDC346-86 / RSK2980).